The primary structure comprises 250 residues: MAGHSKWHNIRHKKAKMDAKRGQMFTKIIREITVAARQGGGDPEFNPRLRIAIEKAKKANMPVENIERAIKRGTGELEGVSYEEVVYEGYGPEGVAIIVECLTDNRNRTTGEVRHIFTKHGGNLGSSGCVSFLFEEKGVILVPKDKYDEETVFEKAIEAGAEDVITDDEEFYEIRTEPKELYTVKENLEKEGIEIEKAELTRIPTTTVEINDEETATKLMKLLDALEDNDDVQKVYSNFEMSQQLMEKVS.

It belongs to the TACO1 family.

It localises to the cytoplasm. In Persephonella marina (strain DSM 14350 / EX-H1), this protein is Probable transcriptional regulatory protein PERMA_0079.